The sequence spans 369 residues: MKYKRIVFKVGTSSLTNEDGSLSRSKVKDITQQLAMLHEAGHELILVSSGAIAAGFGALGFKKRPTKIADKQASAAVGQGLLLEEYTTNLLLRQIVSAQILLTQDDFVDKRRYKNAHQALSVLLNRGAIPIINENDSVVIDELKVGDNDTLSAQVAAMVQADLLVFLTDVDGLYTGNPNSDPRAKRLERIETINREIIDMAGGAGSSNGTGGMLTKIKAATIATESGVPVYICSSLKSDSMIEAAEETEDGSYFVAQEKGLRTQKQWLAFYAQSQGSIWVDKGAAEALSQYGKSLLLSGIVEAEGVFSYGDIVTVFDKESGKSLGKGRVQFGASALEDMLRSQKAKGVLIYRDDWISITPEIQLLFTEF.

Lys-9 contacts ATP. Substrate is bound by residues Ser-49, Asp-136, and Asn-148. Residues 168–169 (TD) and 210–216 (TGGMLTK) contribute to the ATP site. In terms of domain architecture, PUA spans 275–355 (QGSIWVDKGA…KGVLIYRDDW (81 aa)).

This sequence belongs to the glutamate 5-kinase family.

Its subcellular location is the cytoplasm. It catalyses the reaction L-glutamate + ATP = L-glutamyl 5-phosphate + ADP. It functions in the pathway amino-acid biosynthesis; L-proline biosynthesis; L-glutamate 5-semialdehyde from L-glutamate: step 1/2. Catalyzes the transfer of a phosphate group to glutamate to form L-glutamate 5-phosphate. This is Glutamate 5-kinase from Streptococcus pneumoniae serotype 4 (strain ATCC BAA-334 / TIGR4).